A 325-amino-acid chain; its full sequence is NADH-quinone oxidoreductase subunit H (325 aa).

A run of 8 helical transmembrane segments spans residues 11–31, 81–101, 114–134, 154–174, 186–206, 237–257, 265–285, and 304–324; these read ILLT…CGAF, VIFT…FAIV, IGIL…LFAG, LSYE…AGSF, VWNV…GVAV, FFVG…TLFF, LPPF…FILI, and ICLP…LWQA.

It belongs to the complex I subunit 1 family. In terms of assembly, NDH-1 is composed of 13 different subunits. Subunits NuoA, H, J, K, L, M, N constitute the membrane sector of the complex.

It localises to the cell inner membrane. The enzyme catalyses a quinone + NADH + 5 H(+)(in) = a quinol + NAD(+) + 4 H(+)(out). NDH-1 shuttles electrons from NADH, via FMN and iron-sulfur (Fe-S) centers, to quinones in the respiratory chain. The immediate electron acceptor for the enzyme in this species is believed to be ubiquinone. Couples the redox reaction to proton translocation (for every two electrons transferred, four hydrogen ions are translocated across the cytoplasmic membrane), and thus conserves the redox energy in a proton gradient. This subunit may bind ubiquinone. The chain is NADH-quinone oxidoreductase subunit H from Escherichia coli O139:H28 (strain E24377A / ETEC).